The primary structure comprises 512 residues: Bifunctional purine biosynthesis protein PurH (512 aa).

An MGS-like domain is found at 1–144 (MKRALVSVSD…KNYRDVVVVV (144 aa)).

The protein belongs to the PurH family.

It catalyses the reaction (6R)-10-formyltetrahydrofolate + 5-amino-1-(5-phospho-beta-D-ribosyl)imidazole-4-carboxamide = 5-formamido-1-(5-phospho-D-ribosyl)imidazole-4-carboxamide + (6S)-5,6,7,8-tetrahydrofolate. The catalysed reaction is IMP + H2O = 5-formamido-1-(5-phospho-D-ribosyl)imidazole-4-carboxamide. The protein operates within purine metabolism; IMP biosynthesis via de novo pathway; 5-formamido-1-(5-phospho-D-ribosyl)imidazole-4-carboxamide from 5-amino-1-(5-phospho-D-ribosyl)imidazole-4-carboxamide (10-formyl THF route): step 1/1. It functions in the pathway purine metabolism; IMP biosynthesis via de novo pathway; IMP from 5-formamido-1-(5-phospho-D-ribosyl)imidazole-4-carboxamide: step 1/1. The sequence is that of Bifunctional purine biosynthesis protein PurH from Ligilactobacillus salivarius (strain UCC118) (Lactobacillus salivarius).